The chain runs to 168 residues: uncharacterized protein (168 aa).

It localises to the mitochondrion. This is an uncharacterized protein from Marchantia polymorpha (Common liverwort).